A 618-amino-acid polypeptide reads, in one-letter code: Proline--tRNA ligase (618 aa).

This sequence belongs to the class-II aminoacyl-tRNA synthetase family. ProS type 1 subfamily. As to quaternary structure, homodimer.

Its subcellular location is the cytoplasm. It catalyses the reaction tRNA(Pro) + L-proline + ATP = L-prolyl-tRNA(Pro) + AMP + diphosphate. Catalyzes the attachment of proline to tRNA(Pro) in a two-step reaction: proline is first activated by ATP to form Pro-AMP and then transferred to the acceptor end of tRNA(Pro). As ProRS can inadvertently accommodate and process non-cognate amino acids such as alanine and cysteine, to avoid such errors it has two additional distinct editing activities against alanine. One activity is designated as 'pretransfer' editing and involves the tRNA(Pro)-independent hydrolysis of activated Ala-AMP. The other activity is designated 'posttransfer' editing and involves deacylation of mischarged Ala-tRNA(Pro). The misacylated Cys-tRNA(Pro) is not edited by ProRS. This is Proline--tRNA ligase from Streptococcus pyogenes serotype M3 (strain ATCC BAA-595 / MGAS315).